Consider the following 419-residue polypeptide: UDP-N-acetylglucosamine 1-carboxyvinyltransferase (419 aa).

22–23 (KN) is a binding site for phosphoenolpyruvate. Arg92 provides a ligand contact to UDP-N-acetyl-alpha-D-glucosamine. The active-site Proton donor is Cys116. Position 116 is a 2-(S-cysteinyl)pyruvic acid O-phosphothioketal (Cys116). The UDP-N-acetyl-alpha-D-glucosamine site is built by Asp306 and Ile328.

This sequence belongs to the EPSP synthase family. MurA subfamily.

The protein localises to the cytoplasm. It carries out the reaction phosphoenolpyruvate + UDP-N-acetyl-alpha-D-glucosamine = UDP-N-acetyl-3-O-(1-carboxyvinyl)-alpha-D-glucosamine + phosphate. Its pathway is cell wall biogenesis; peptidoglycan biosynthesis. Functionally, cell wall formation. Adds enolpyruvyl to UDP-N-acetylglucosamine. The chain is UDP-N-acetylglucosamine 1-carboxyvinyltransferase from Pseudoalteromonas translucida (strain TAC 125).